We begin with the raw amino-acid sequence, 501 residues long: Acetylcholine receptor subunit beta (501 aa).

Positions methionine 1–glycine 23 are cleaved as a signal peptide. Topologically, residues serine 24–lysine 244 are extracellular. An intrachain disulfide couples cysteine 151 to cysteine 165. Asparagine 164 is a glycosylation site (N-linked (GlcNAc...) asparagine). Transmembrane regions (helical) follow at residues proline 245–leucine 269, methionine 277–alanine 295, and tyrosine 311–leucine 332. Over histidine 333 to arginine 469 the chain is Cytoplasmic. Residues arginine 362 to serine 381 are disordered. A compositionally biased stretch (basic and acidic residues) spans proline 363 to histidine 375. Phosphotyrosine; by Tyr-kinases is present on tyrosine 390. The helical transmembrane segment at leucine 470–leucine 488 threads the bilayer.

This sequence belongs to the ligand-gated ion channel (TC 1.A.9) family. Acetylcholine receptor (TC 1.A.9.1) subfamily. Beta-1/CHRNB1 sub-subfamily. Pentamer of two alpha chains, and one each of the beta, delta, and gamma (in immature muscle) or epsilon (in mature muscle) chains. The muscle heteropentamer composed of alpha-1, beta-1, delta, epsilon subunits interacts with the alpha-conotoxin ImII.

The protein localises to the postsynaptic cell membrane. Its subcellular location is the cell membrane. The enzyme catalyses K(+)(in) = K(+)(out). It carries out the reaction Na(+)(in) = Na(+)(out). Functionally, after binding acetylcholine, the AChR responds by an extensive change in conformation that affects all subunits and leads to opening of an ion-conducting channel across the plasma membrane. This chain is Acetylcholine receptor subunit beta (Chrnb1), found in Rattus norvegicus (Rat).